We begin with the raw amino-acid sequence, 331 residues long: MGFGQFDSICQKAALPLCSLVGPSSPISGSTGIIPNCYARNIELANTIIFEGAASFVHIIALGMTVIMILHVRSKFTAVGRKEIITFFYIYMALTICSLVIDAGVVPPRSGPFPYFVAVQNGLSSALCTCLLINGFVGFQLYEDGTFLSVWLIRLTSAVMFVVSFLISLLTFKSWGGMSPTNTIALFVVLYILNAISIAIYLVMQLLLVMNTLEDRWPLGHIAFGVIVFICGQVLLYGFSDTICDNVQHYLDGLFFATFCNLLAVMMVYKFWDYITKEDLEFSVGIKPNTWEVKELLPEEDRRTTVYQDSHSEYAGSMYHHRASTYGGHNY.

7 helical membrane passes run 48 to 68, 84 to 104, 122 to 142, 147 to 167, 184 to 204, 219 to 239, and 249 to 269; these read IIFEGAASFVHIIALGMTVIM, IITFFYIYMALTICSLVIDAG, GLSSALCTCLLINGFVGFQLY, FLSVWLIRLTSAVMFVVSFLI, IALFVVLYILNAISIAIYLVM, LGHIAFGVIVFICGQVLLYGF, and HYLDGLFFATFCNLLAVMMVY.

Belongs to the CHS7 family. Interacts with chs3.

The protein resides in the endoplasmic reticulum membrane. Chaperone required for the export of the chitin synthase chs3 from the endoplasmic reticulum. The chain is Chitin synthase export chaperone (chs7) from Aspergillus fumigatus (strain ATCC MYA-4609 / CBS 101355 / FGSC A1100 / Af293) (Neosartorya fumigata).